A 319-amino-acid polypeptide reads, in one-letter code: Secreted effector protein sopD2 (319 aa).

Positions 37 to 44 match the Required to target late endocytic compartments motif; that stretch reads WDRFKDCF.

It belongs to the SopD family.

The protein localises to the secreted. It is found in the host cell membrane. In terms of biological role, effector proteins function to alter host cell physiology and promote bacterial survival in host tissues. Contributes to the formation of Salmonella-induced filaments (Sifs) in infected epithelial cells and to replication in macrophages. The polypeptide is Secreted effector protein sopD2 (sopD2) (Salmonella typhimurium (strain LT2 / SGSC1412 / ATCC 700720)).